We begin with the raw amino-acid sequence, 230 residues long: uncharacterized protein (230 aa).

The segment at 118-195 (LLDEILPKEP…SKREMERLER (78 aa)) is disordered. Residues 136–146 (QKKKEKRAALK) are compositionally biased toward basic residues. Basic and acidic residues-rich tracts occupy residues 160–170 (ETDLYGDRDSF) and 179–195 (QRSE…RLER).

This is an uncharacterized protein from Schizosaccharomyces pombe (strain 972 / ATCC 24843) (Fission yeast).